We begin with the raw amino-acid sequence, 340 residues long: tRNA N6-adenosine threonylcarbamoyltransferase (340 aa).

Fe cation contacts are provided by His115 and His119. Substrate contacts are provided by residues 138–142 (VVSGG), Asp171, Gly184, Asp188, and Asn278. Residue Asp306 participates in Fe cation binding.

The protein belongs to the KAE1 / TsaD family. Fe(2+) serves as cofactor.

Its subcellular location is the cytoplasm. It carries out the reaction L-threonylcarbamoyladenylate + adenosine(37) in tRNA = N(6)-L-threonylcarbamoyladenosine(37) in tRNA + AMP + H(+). Functionally, required for the formation of a threonylcarbamoyl group on adenosine at position 37 (t(6)A37) in tRNAs that read codons beginning with adenine. Is involved in the transfer of the threonylcarbamoyl moiety of threonylcarbamoyl-AMP (TC-AMP) to the N6 group of A37, together with TsaE and TsaB. TsaD likely plays a direct catalytic role in this reaction. The chain is tRNA N6-adenosine threonylcarbamoyltransferase from Clostridium botulinum (strain Kyoto / Type A2).